The following is a 36-amino-acid chain: Photosystem I reaction center subunit VIII (36 aa).

Residues 8 to 28 form a helical membrane-spanning segment; it reads SVLVPLVGLVFPAIAMASLFL.

It belongs to the PsaI family.

The protein resides in the plastid. Its subcellular location is the chloroplast thylakoid membrane. May help in the organization of the PsaL subunit. The sequence is that of Photosystem I reaction center subunit VIII from Helianthus annuus (Common sunflower).